The chain runs to 293 residues: Large ribosomal subunit protein uL18 (293 aa).

The span at 247–263 shows a compositional bias: basic and acidic residues; sequence IRANPAHEKKQPRDGLV. The interval 247–283 is disordered; sequence IRANPAHEKKQPRDGLVKKRWNRAKMSLKQKRDRVKQ. Basic residues predominate over residues 264–283; that stretch reads KKRWNRAKMSLKQKRDRVKQ.

It belongs to the universal ribosomal protein uL18 family. Component of the large ribosomal subunit (LSU).

The protein resides in the cytoplasm. It is found in the nucleus. Component of the ribosome, a large ribonucleoprotein complex responsible for the synthesis of proteins in the cell. The small ribosomal subunit (SSU) binds messenger RNAs (mRNAs) and translates the encoded message by selecting cognate aminoacyl-transfer RNA (tRNA) molecules. The large subunit (LSU) contains the ribosomal catalytic site termed the peptidyl transferase center (PTC), which catalyzes the formation of peptide bonds, thereby polymerizing the amino acids delivered by tRNAs into a polypeptide chain. The nascent polypeptides leave the ribosome through a tunnel in the LSU and interact with protein factors that function in enzymatic processing, targeting, and the membrane insertion of nascent chains at the exit of the ribosomal tunnel. The sequence is that of Large ribosomal subunit protein uL18 (RPL5) from Suberites domuncula (Sponge).